The chain runs to 67 residues: ATP synthase F(0) complex subunit 8 (67 aa).

A helical transmembrane segment spans residues 8–24 (TWFTTILSTSFSIIHRL). Lysine 54 carries the post-translational modification N6-acetyllysine; alternate. Lysine 54 is subject to N6-succinyllysine; alternate. Residue lysine 57 is modified to N6-acetyllysine.

This sequence belongs to the ATPase protein 8 family. Component of the ATP synthase complex composed at least of ATP5F1A/subunit alpha, ATP5F1B/subunit beta, ATP5MC1/subunit c (homooctomer), MT-ATP6/subunit a, MT-ATP8/subunit 8, ATP5ME/subunit e, ATP5MF/subunit f, ATP5MG/subunit g, ATP5MK/subunit k, ATP5MJ/subunit j, ATP5F1C/subunit gamma, ATP5F1D/subunit delta, ATP5F1E/subunit epsilon, ATP5PF/subunit F6, ATP5PB/subunit b, ATP5PD/subunit d, ATP5PO/subunit OSCP. ATP synthase complex consists of a soluble F(1) head domain (subunits alpha(3) and beta(3)) - the catalytic core - and a membrane F(0) domain - the membrane proton channel (subunits c, a, 8, e, f, g, k and j). These two domains are linked by a central stalk (subunits gamma, delta, and epsilon) rotating inside the F1 region and a stationary peripheral stalk (subunits F6, b, d, and OSCP). Interacts with PRICKLE3.

The protein localises to the mitochondrion membrane. Subunit 8, of the mitochondrial membrane ATP synthase complex (F(1)F(0) ATP synthase or Complex V) that produces ATP from ADP in the presence of a proton gradient across the membrane which is generated by electron transport complexes of the respiratory chain. ATP synthase complex consist of a soluble F(1) head domain - the catalytic core - and a membrane F(1) domain - the membrane proton channel. These two domains are linked by a central stalk rotating inside the F(1) region and a stationary peripheral stalk. During catalysis, ATP synthesis in the catalytic domain of F(1) is coupled via a rotary mechanism of the central stalk subunits to proton translocation. In vivo, can only synthesize ATP although its ATP hydrolase activity can be activated artificially in vitro. Part of the complex F(0) domain. The sequence is that of ATP synthase F(0) complex subunit 8 from Glis glis (Fat dormouse).